Here is a 128-residue protein sequence, read N- to C-terminus: Large ribosomal subunit protein bL17 (128 aa).

This sequence belongs to the bacterial ribosomal protein bL17 family. Part of the 50S ribosomal subunit. Contacts protein L32.

The polypeptide is Large ribosomal subunit protein bL17 (Haemophilus influenzae (strain 86-028NP)).